The sequence spans 188 residues: Peptidyl-tRNA hydrolase (188 aa).

Tyr-18 provides a ligand contact to tRNA. His-23 functions as the Proton acceptor in the catalytic mechanism. Positions 67, 69, and 115 each coordinate tRNA.

This sequence belongs to the PTH family. In terms of assembly, monomer.

It localises to the cytoplasm. It carries out the reaction an N-acyl-L-alpha-aminoacyl-tRNA + H2O = an N-acyl-L-amino acid + a tRNA + H(+). Its function is as follows. Hydrolyzes ribosome-free peptidyl-tRNAs (with 1 or more amino acids incorporated), which drop off the ribosome during protein synthesis, or as a result of ribosome stalling. In terms of biological role, catalyzes the release of premature peptidyl moieties from peptidyl-tRNA molecules trapped in stalled 50S ribosomal subunits, and thus maintains levels of free tRNAs and 50S ribosomes. The polypeptide is Peptidyl-tRNA hydrolase (Salinibacter ruber (strain DSM 13855 / M31)).